The primary structure comprises 263 residues: Flagellar brake protein YcgR (263 aa).

The disordered stretch occupies residues 1–21 (MAELSTPSPASPAPLDGGRGD). Positions 133 to 250 (QRREFYRLQV…DTRIQRYIFK (118 aa)) constitute a PilZ domain.

The protein belongs to the YcgR family. As to quaternary structure, monomer. Interacts with the flagellar basal bodies.

It is found in the bacterial flagellum basal body. Its function is as follows. Acts as a flagellar brake, regulating swimming and swarming in a bis-(3'-5') cyclic diguanylic acid (c-di-GMP)-dependent manner. Binds 1 c-di-GMP dimer per subunit. Increasing levels of c-di-GMP lead to decreased motility. In Thauera aminoaromatica, this protein is Flagellar brake protein YcgR.